The primary structure comprises 624 residues: Glycosyltransferase AglD (624 aa).

Residue aspartate 201 is part of the active site. The next 8 membrane-spanning stretches (helical) occupy residues 260–280 (VTIVAGLLLTVLALALMTLYI), 285–305 (VISVLGDADPALVAAAAVIYV), 381–401 (LLTIAGLAGVVLVGLAATGGL), 427–447 (AAYVATGVGVVAILGVLGIAL), 496–518 (VGLTSLAIWTVDVVTAVVVLLAL), 532–552 (FFAVSVGNLAKVLPLSPGGVG), 556–576 (IAFTVFMAALAPVTPAAALAA), and 587–607 (VTIVGGVGSMLSLNVSLTTAV).

Belongs to the glycosyltransferase 2 family.

It is found in the cell membrane. The protein operates within cell surface structure biogenesis; S-layer biogenesis. Involved in the assembly of a N-linked pentasaccharide that decorates the S-layer glycoprotein and flagellins. Catalyzes the addition of the mannose found at position 5 of the pentasaccharide to its own distinct dolichol phosphate carrier. The protein is Glycosyltransferase AglD (aglD) of Haloferax volcanii (strain ATCC 29605 / DSM 3757 / JCM 8879 / NBRC 14742 / NCIMB 2012 / VKM B-1768 / DS2) (Halobacterium volcanii).